The chain runs to 47 residues: Large ribosomal subunit protein bL34 (47 aa).

Belongs to the bacterial ribosomal protein bL34 family.

This is Large ribosomal subunit protein bL34 from Rhodococcus erythropolis (strain PR4 / NBRC 100887).